A 496-amino-acid chain; its full sequence is MAKPEEVSVPIFTSLEPVYGEGSLLQEATQRFDVLKANFNDVFGASPQLFARSPGRVNLIGEHIDYEGYSVLPMAIRQDTIIAIRKCEDQKQLRIANVNDKYTMCTYPADPDQEIDLKNHKWGHYFICAYKGFHEYAKSKGVNLGSPVGLDVLVDGIVPTGSGLSSSAAFVCSATIAIMAVFGHNFEKKELAQLTCECERHIGTQSGGMDQAISIMAKTGFAELIDFNPVRATDVKLPDGGSFVIAHSLAESQKAVTAAKNYNNRVVECRLASIILGVKLGMEPKEAISKVKTLSDVEGLCVSFAGDRGSSDPLLAVKEYLKEEPYTAEEIEKILEEKLPSIVNNDPTSLAVLNAATHFKLHQRAAHVYSEARRVHGFKDTVNSNLSDEEKLKKLGDLMNESHYSCSVLYECSCPELEELVQVCKENGALGARLTGAGWGGCAVALVKEFDVTQFIPAVKEKYYKKRVEKGVVKKEDMELYLFASKPSSGAAIFNL.

N-acetylalanine is present on Ala-2. Positions 56, 62, 63, and 65 each coordinate alpha-D-galactose. ATP-binding residues include Gly-161, Gly-163, Ser-165, and Ser-166. Asp-210 serves as a coordination point for alpha-D-galactose. Residue Asp-210 is the Proton acceptor of the active site. 3 residues coordinate ATP: Ser-252, Gln-253, and Lys-254. An alpha-D-galactose-binding site is contributed by Tyr-262.

It belongs to the GHMP kinase family. GalK subfamily. It depends on Mg(2+) as a cofactor. Mn(2+) is required as a cofactor. Ca(2+) serves as cofactor. Expressed in roots, stems, leaves, flowers and young siliques. Higher expression in the elongating middle stem region than in the lower or upper stem region.

It carries out the reaction alpha-D-galactose + ATP = alpha-D-galactose 1-phosphate + ADP + H(+). Its pathway is carbohydrate metabolism; galactose metabolism. Sugar-1-kinase with a very high substrate specificity for the alpha-anomeric configuration of D-galacose (D-Gal). Also efficiently converts 2-deoxy-D-Gal to 2-deoxy-D-al-1-phosphate. The polypeptide is Galactokinase (GAL1) (Arabidopsis thaliana (Mouse-ear cress)).